The primary structure comprises 38 residues: Anthranilate phosphoribosyltransferase (38 aa).

It belongs to the anthranilate phosphoribosyltransferase family. In terms of assembly, homodimer.

The catalysed reaction is N-(5-phospho-beta-D-ribosyl)anthranilate + diphosphate = 5-phospho-alpha-D-ribose 1-diphosphate + anthranilate. Its pathway is amino-acid biosynthesis; L-tryptophan biosynthesis; L-tryptophan from chorismate: step 2/5. In terms of biological role, catalyzes the transfer of the phosphoribosyl group of 5-phosphorylribose-1-pyrophosphate (PRPP) to anthranilate to yield N-(5'-phosphoribosyl)-anthranilate (PRA). The polypeptide is Anthranilate phosphoribosyltransferase (trpD) (Serratia marcescens).